The chain runs to 416 residues: Gamma-glutamyl phosphate reductase (416 aa).

This sequence belongs to the gamma-glutamyl phosphate reductase family.

Its subcellular location is the cytoplasm. The enzyme catalyses L-glutamate 5-semialdehyde + phosphate + NADP(+) = L-glutamyl 5-phosphate + NADPH + H(+). Its pathway is amino-acid biosynthesis; L-proline biosynthesis; L-glutamate 5-semialdehyde from L-glutamate: step 2/2. Functionally, catalyzes the NADPH-dependent reduction of L-glutamate 5-phosphate into L-glutamate 5-semialdehyde and phosphate. The product spontaneously undergoes cyclization to form 1-pyrroline-5-carboxylate. This is Gamma-glutamyl phosphate reductase from Vibrio vulnificus (strain CMCP6).